The following is a 79-amino-acid chain: Sulfur carrier protein TusA (79 aa).

C17 functions as the Cysteine persulfide intermediate in the catalytic mechanism.

It belongs to the sulfur carrier protein TusA family.

It localises to the cytoplasm. Functionally, sulfur carrier protein which probably makes part of a sulfur-relay system. The sequence is that of Sulfur carrier protein TusA from Haemophilus influenzae (strain 86-028NP).